Here is a 512-residue protein sequence, read N- to C-terminus: ATP synthase subunit alpha (512 aa).

Position 169 to 176 (169 to 176 (GDRQTGKT)) interacts with ATP.

It belongs to the ATPase alpha/beta chains family. In terms of assembly, F-type ATPases have 2 components, CF(1) - the catalytic core - and CF(0) - the membrane proton channel. CF(1) has five subunits: alpha(3), beta(3), gamma(1), delta(1), epsilon(1). CF(0) has three main subunits: a(1), b(2) and c(9-12). The alpha and beta chains form an alternating ring which encloses part of the gamma chain. CF(1) is attached to CF(0) by a central stalk formed by the gamma and epsilon chains, while a peripheral stalk is formed by the delta and b chains.

Its subcellular location is the cell inner membrane. It carries out the reaction ATP + H2O + 4 H(+)(in) = ADP + phosphate + 5 H(+)(out). Functionally, produces ATP from ADP in the presence of a proton gradient across the membrane. The alpha chain is a regulatory subunit. The polypeptide is ATP synthase subunit alpha (Orientia tsutsugamushi (strain Boryong) (Rickettsia tsutsugamushi)).